The chain runs to 22 residues: Pectinesterase (22 aa).

D6 serves as the catalytic Proton donor. Positions 19 and 21 each coordinate substrate.

This sequence belongs to the pectinesterase family.

The protein localises to the secreted. The protein resides in the cell wall. The catalysed reaction is [(1-&gt;4)-alpha-D-galacturonosyl methyl ester](n) + n H2O = [(1-&gt;4)-alpha-D-galacturonosyl](n) + n methanol + n H(+). It functions in the pathway glycan metabolism; pectin degradation; 2-dehydro-3-deoxy-D-gluconate from pectin: step 1/5. This Capsicum chinense (Scotch bonnet) protein is Pectinesterase.